A 257-amino-acid chain; its full sequence is uncharacterized protein (257 aa).

NAD(+) is bound by residues Asp34, Asp60, Val61, Asn87, Tyr152, and Lys156. The Proton acceptor role is filled by Tyr152.

Belongs to the short-chain dehydrogenases/reductases (SDR) family.

This is an uncharacterized protein from Bacillus subtilis (strain 168).